Consider the following 391-residue polypeptide: Shewanella-like protein phosphatase 2 (391 aa).

The Mn(2+) site is built by aspartate 61, histidine 63, aspartate 97, and asparagine 132. Histidine 133 serves as the catalytic Proton donor. The Mn(2+) site is built by histidine 232 and histidine 295.

The protein belongs to the metallophosphoesterase superfamily. SLP family. Mn(2+) serves as cofactor. As to expression, expressed in roots and siliques (at protein level).

It localises to the cytoplasm. Its subcellular location is the cytosol. Shows phosphatase activity, hydrolyzing the artificial substrate para-nitrophenylphosphate (pNPP) in vitro. The polypeptide is Shewanella-like protein phosphatase 2 (Arabidopsis thaliana (Mouse-ear cress)).